Here is a 206-residue protein sequence, read N- to C-terminus: Recombination protein RecR (206 aa).

The C4-type zinc-finger motif lies at 58–73 (CENCHNISDTKVCEIC). The region spanning 81-176 (QTICVVEDIR…IISTIARGIS (96 aa)) is the Toprim domain.

Belongs to the RecR family.

In terms of biological role, may play a role in DNA repair. It seems to be involved in an RecBC-independent recombinational process of DNA repair. It may act with RecF and RecO. This chain is Recombination protein RecR, found in Flavobacterium johnsoniae (strain ATCC 17061 / DSM 2064 / JCM 8514 / BCRC 14874 / CCUG 350202 / NBRC 14942 / NCIMB 11054 / UW101) (Cytophaga johnsonae).